The sequence spans 75 residues: Microcin H47 (75 aa).

The propeptide occupies 1 to 15 (MREITESQLRYISGA). A helical membrane pass occupies residues 30 to 50 (AIVGALAGIPGGPLGVVVGAV).

The protein localises to the secreted. The protein resides in the host cell membrane. Bactericidal antibiotic. Active on bacteria phylogenetically related to the producing strain. The chain is Microcin H47 (mchB) from Escherichia coli O6:H1 (strain CFT073 / ATCC 700928 / UPEC).